Here is a 321-residue protein sequence, read N- to C-terminus: Lipoyl synthase (321 aa).

Residues cysteine 60, cysteine 65, cysteine 71, cysteine 86, cysteine 90, cysteine 93, and serine 299 each coordinate [4Fe-4S] cluster. Residues 72 to 288 (WEKKHATFMI…ETIGRTKGFL (217 aa)) form the Radical SAM core domain.

The protein belongs to the radical SAM superfamily. Lipoyl synthase family. [4Fe-4S] cluster is required as a cofactor.

The protein localises to the cytoplasm. The catalysed reaction is [[Fe-S] cluster scaffold protein carrying a second [4Fe-4S](2+) cluster] + N(6)-octanoyl-L-lysyl-[protein] + 2 oxidized [2Fe-2S]-[ferredoxin] + 2 S-adenosyl-L-methionine + 4 H(+) = [[Fe-S] cluster scaffold protein] + N(6)-[(R)-dihydrolipoyl]-L-lysyl-[protein] + 4 Fe(3+) + 2 hydrogen sulfide + 2 5'-deoxyadenosine + 2 L-methionine + 2 reduced [2Fe-2S]-[ferredoxin]. It functions in the pathway protein modification; protein lipoylation via endogenous pathway; protein N(6)-(lipoyl)lysine from octanoyl-[acyl-carrier-protein]: step 2/2. In terms of biological role, catalyzes the radical-mediated insertion of two sulfur atoms into the C-6 and C-8 positions of the octanoyl moiety bound to the lipoyl domains of lipoate-dependent enzymes, thereby converting the octanoylated domains into lipoylated derivatives. In Brucella anthropi (strain ATCC 49188 / DSM 6882 / CCUG 24695 / JCM 21032 / LMG 3331 / NBRC 15819 / NCTC 12168 / Alc 37) (Ochrobactrum anthropi), this protein is Lipoyl synthase.